The following is a 566-amino-acid chain: Membrane protein insertase YidC (566 aa).

Residues 6 to 26 traverse the membrane as a helical segment; it reads NLLLLALLFVSFLLYTAWVEE. The tract at residues 30–80 is disordered; it reads QVAPQVQTEQVDSSVPASVASSANSANLSDGVPNSPQQSSTDATSTELPAS. Polar residues predominate over residues 31–41; sequence VAPQVQTEQVD. The segment covering 42-58 has biased composition (low complexity); the sequence is SSVPASVASSANSANLS. A compositionally biased stretch (polar residues) spans 61-80; sequence VPNSPQQSSTDATSTELPAS. 4 consecutive transmembrane segments (helical) span residues 356–376, 433–453, 471–491, and 510–530; these read LLLFFQGIVGNWGVAIILITF, LGGCFPILLQMPIFIALYWSL, LSVQDPYYILPILMGVSMFFI, and FMPVIFTFFFLWFPAGLVLYW.

Belongs to the OXA1/ALB3/YidC family. Type 1 subfamily. Interacts with the Sec translocase complex via SecD. Specifically interacts with transmembrane segments of nascent integral membrane proteins during membrane integration.

It is found in the cell inner membrane. Required for the insertion and/or proper folding and/or complex formation of integral membrane proteins into the membrane. Involved in integration of membrane proteins that insert both dependently and independently of the Sec translocase complex, as well as at least some lipoproteins. Aids folding of multispanning membrane proteins. The chain is Membrane protein insertase YidC from Psychromonas ingrahamii (strain DSM 17664 / CCUG 51855 / 37).